Consider the following 159-residue polypeptide: Bacterioferritin (159 aa).

The region spanning 1-145 is the Ferritin-like diiron domain; that stretch reads MQGDPDVLRL…TQLALMGQLG (145 aa). Fe cation contacts are provided by E18 and E51. Position 52 (M52) interacts with heme b. Fe cation is bound by residues H54, E94, E127, and H130.

The protein belongs to the bacterioferritin family. In terms of assembly, homooligomer of 24 subunits, arranged as 12 dimers, that are packed together to form an approximately spherical molecule with a central cavity, in which large amounts of iron can be deposited. Heme b serves as cofactor.

Its subcellular location is the cytoplasm. The protein resides in the cytosol. The protein localises to the membrane. The enzyme catalyses 4 Fe(2+) + O2 + 4 H(+) = 4 Fe(3+) + 2 H2O. It carries out the reaction Fe(2+)(in) = Fe(2+)(out). Functionally, iron-storage protein, whose ferroxidase center binds Fe(2+), oxidizes it using dioxygen to Fe(3+), and participates in the subsequent Fe(3+) oxide mineral core formation within the central cavity of the BFR protein shell. Probably plays a crucial role in the intracellular existence of this organism by functioning as a temporary depository for iron in iron deprivation. In Mycobacterium leprae (strain TN), this protein is Bacterioferritin (bfr).